A 597-amino-acid polypeptide reads, in one-letter code: Polyphenol oxidase latent form, chloroplastic (597 aa).

The transit peptide at 1-49 (MATAPSPTTMGTYSSLISTNSFSTFLPNKSQLSLSGKSKHYVARRSSIS) directs the protein to the chloroplast. The interval 49–70 (SCKATNNNNSNNQNEQQEESSR) is disordered. The transit peptide at 50 to 101 (CKATNNNNSNNQNEQQEESSRLLGKLDRRNILIGLGGLYGATTLDRKPFAFA) directs the protein to the thylakoid. A compositionally biased stretch (low complexity) spans 54-63 (NNNNSNNQNE). 2 cysteine pairs are disulfide-bonded: C112–C128 and C127–C189. Cu cation is bound by residues H188, H209, H218, H341, H345, and H375. A cross-link (2'-(S-cysteinyl)-histidine (Cys-His)) is located at residues 192 to 209 (CNGAYPQVGFTDNDIQVH).

Belongs to the tyrosinase family. In terms of assembly, monomer. It depends on Cu(2+) as a cofactor. Expressed in immature-green fruit.

The protein localises to the plastid. The protein resides in the chloroplast thylakoid lumen. It catalyses the reaction 2 catechol + O2 = 2 1,2-benzoquinone + 2 H2O. Activated in the presence of substrate at low pH. Specific activity fluctuates during fruit ripening, starting at immature-green stage, reaching a peak at the breaker stage, followed by a sharp decrease until the half-ripe stage to remain stable during the following development stages. Triggered by CuSO(4) and by low concentrations of SDS. Repressed by several inhibitors including 4-hexylresorcinol, ascorbic acid, benzoic acid, kojic acid, glutathione (reduced form), L-cysteine and sodium metabisulfite. Inhibited by various salt such as FeSO(4), KCl, NaCl, CaCl(2), MnCl(2), NiCl(2) and AlCl(3). Spontaneously activated during storage at 4 degrees Celsius. In terms of biological role, catalyzes the oxidation of mono- and o-diphenols to o-diquinones. Uses preferentially 4-methylcatechol and chlorogenic acid as substrates, followed by caffeic acid, pyrogallol, and catechol, but barely active toward dopamine and L-dopa. No activity detected with monophenols (e.g. phenol and tyramine). This Prunus armeniaca (Apricot) protein is Polyphenol oxidase latent form, chloroplastic.